A 168-amino-acid chain; its full sequence is Oleosin 18.2 kDa (168 aa).

Ala2 bears the N-acetylalanine mark. Residues 2 to 45 form a polar region; that stretch reads AEVRDRNLPHQVQVHPQYRLDNTTGGGYGAKNYHSGPSTSQVLA. The next 3 helical transmembrane spans lie at 43–63, 76–96, and 97–117; these read VLAV…AGLT, PLFI…AMAV, and TGFL…SYVL. Residues 46–117 are hydrophobic; that stretch reads VLTLLPIGGT…TGLSSLSYVL (72 aa).

This sequence belongs to the oleosin family.

The protein resides in the lipid droplet. Its subcellular location is the membrane. In terms of biological role, may have a structural role to stabilize the lipid body during desiccation of the seed by preventing coalescence of the oil. Probably interacts with both lipid and phospholipid moieties of lipid bodies. May also provide recognition signals for specific lipase anchorage in lipolysis during seedling growth. In Gossypium hirsutum (Upland cotton), this protein is Oleosin 18.2 kDa (MATP6-A).